Here is a 477-residue protein sequence, read N- to C-terminus: Xylose isomerase (477 aa).

His-142 is an active-site residue. Mn(2+)-binding residues include Glu-273, Glu-309, His-312, Asp-337, Asp-348, Asp-350, and Asp-380.

Belongs to the xylose isomerase family. The cofactor is Mn(2+).

The catalysed reaction is alpha-D-xylose = alpha-D-xylulofuranose. This is Xylose isomerase (XYLA) from Arabidopsis thaliana (Mouse-ear cress).